A 339-amino-acid polypeptide reads, in one-letter code: Phenylalanine--tRNA ligase alpha subunit (339 aa).

Glu-250 contacts Mg(2+).

The protein belongs to the class-II aminoacyl-tRNA synthetase family. Phe-tRNA synthetase alpha subunit type 1 subfamily. As to quaternary structure, tetramer of two alpha and two beta subunits. Requires Mg(2+) as cofactor.

The protein localises to the cytoplasm. It carries out the reaction tRNA(Phe) + L-phenylalanine + ATP = L-phenylalanyl-tRNA(Phe) + AMP + diphosphate + H(+). The sequence is that of Phenylalanine--tRNA ligase alpha subunit from Bacteroides fragilis (strain ATCC 25285 / DSM 2151 / CCUG 4856 / JCM 11019 / LMG 10263 / NCTC 9343 / Onslow / VPI 2553 / EN-2).